Consider the following 597-residue polypeptide: Elongation factor 4 (597 aa).

Residues 2–184 (DHIRNFSIIA…ALIAKVPPPK (183 aa)) form the tr-type G domain. GTP is bound by residues 14 to 19 (DHGKST) and 131 to 134 (NKID).

The protein belongs to the TRAFAC class translation factor GTPase superfamily. Classic translation factor GTPase family. LepA subfamily.

It is found in the cell inner membrane. It carries out the reaction GTP + H2O = GDP + phosphate + H(+). Functionally, required for accurate and efficient protein synthesis under certain stress conditions. May act as a fidelity factor of the translation reaction, by catalyzing a one-codon backward translocation of tRNAs on improperly translocated ribosomes. Back-translocation proceeds from a post-translocation (POST) complex to a pre-translocation (PRE) complex, thus giving elongation factor G a second chance to translocate the tRNAs correctly. Binds to ribosomes in a GTP-dependent manner. The chain is Elongation factor 4 from Cupriavidus taiwanensis (strain DSM 17343 / BCRC 17206 / CCUG 44338 / CIP 107171 / LMG 19424 / R1) (Ralstonia taiwanensis (strain LMG 19424)).